A 134-amino-acid chain; its full sequence is Profilin-3 (134 aa).

Cysteine 13 and cysteine 118 are disulfide-bonded. An Involved in PIP2 interaction motif is present at residues alanine 84 to threonine 100. Threonine 114 carries the post-translational modification Phosphothreonine.

This sequence belongs to the profilin family. In terms of assembly, occurs in many kinds of cells as a complex with monomeric actin in a 1:1 ratio. Phosphorylated by MAP kinases.

Its subcellular location is the cytoplasm. It is found in the cytoskeleton. Functionally, binds to actin and affects the structure of the cytoskeleton. At high concentrations, profilin prevents the polymerization of actin, whereas it enhances it at low concentrations. By binding to PIP2, it inhibits the formation of IP3 and DG. The polypeptide is Profilin-3 (PRO3) (Olea europaea (Common olive)).